A 401-amino-acid polypeptide reads, in one-letter code: Voltage-gated potassium channel subunit beta-3 (401 aa).

2 stretches are compositionally biased toward polar residues: residues 1–14 and 32–41; these read MQVS…TLRS and GVSMAQTKQR. Residues 1–49 are disordered; that stretch reads MQVSFACTEQTLRSRTSEDRLCPSRPSGGQNGVSMAQTKQRTPPMGAKN. NADP(+) contacts are provided by Thr-90, Trp-91, Gln-97, and Asp-119. Tyr-124 (proton donor/acceptor) is an active-site residue. 17 residues coordinate NADP(+): Asn-192, Ser-222, Arg-223, Gln-248, Trp-277, Ser-278, Pro-279, Leu-280, Ala-281, Cys-282, Lys-288, Arg-298, Gly-357, Ser-359, Gln-363, Glu-366, and Asn-367.

This sequence belongs to the shaker potassium channel beta subunit family. As to quaternary structure, forms heteromultimeric complex with alpha subunits. Identified in potassium channel complexes containing KCNA1 and KCNA2.

The protein localises to the cytoplasm. Its function is as follows. Regulatory subunit of the voltage-gated potassium (Kv) channels composed of pore-forming and potassium-conducting alpha subunits and of regulatory beta subunit. The beta-3/KCNAB3 subunit may mediate closure of potassium channels. Increases and accelerates inactivation of Kv1.1/KCNA1 and Kv2.2/KCNA2 subunit-containing channels. May display nicotinamide adenine dinucleotide phosphate (NADPH)-dependent aldoketoreductase activity. The binding of oxidized and reduced NADP(H) cofactors may be required for the regulation of potassium channel activity. The protein is Voltage-gated potassium channel subunit beta-3 (kcnab3) of Xenopus laevis (African clawed frog).